A 102-amino-acid chain; its full sequence is MNQINIEIAYAFPERYYLKSFQVDEGITVQTAITQSGILSQFPEIDLSTNKIGIFSRPIKLTDVLKEGDRIEIYRPLLADPKEIRRKRAAEQAAAKDKEKGA.

It belongs to the UPF0125 (RnfH) family.

This chain is Protein RnfH, found in Haemophilus influenzae (strain 86-028NP).